The sequence spans 70 residues: Envelope small membrane protein (70 aa).

The N-myristoyl glycine; by host moiety is linked to residue Gly-2. The tract at residues Gly-2–Ala-15 is endoplasmic reticulum retention signal. Residues Gly-2 to Asp-25 are Virion surface-facing. The chain crosses the membrane as a helical span at residues Ile-26–Leu-46. The Intravirion segment spans residues Leu-47–Leu-70.

This sequence belongs to the arteriviridae E protein family. In terms of assembly, homooligomer. Associates with itself into higher-order structures, including dimers, trimers and tetramers. Associates with the GP2b-GP3-GP4 complex. Myristoylated. In terms of processing, not glycosylated.

Its subcellular location is the virion membrane. It localises to the host endoplasmic reticulum membrane. The protein resides in the host Golgi apparatus membrane. It is found in the secreted. Functionally, minor envelope protein. May function as a viroporin in the virion envelope that facilitates uncoating of the virus in order to release the genomic RNA into the cytoplasm for subsequent replication. The protein is Envelope small membrane protein (GP2b) of Sus scrofa (Pig).